Here is an 81-residue protein sequence, read N- to C-terminus: Cytochrome b559 subunit alpha (81 aa).

A helical transmembrane segment spans residues Val-21–Trp-35. His-23 serves as a coordination point for heme.

Belongs to the PsbE/PsbF family. As to quaternary structure, heterodimer of an alpha subunit and a beta subunit. PSII is composed of 1 copy each of membrane proteins PsbA, PsbB, PsbC, PsbD, PsbE, PsbF, PsbH, PsbI, PsbJ, PsbK, PsbL, PsbM, PsbT, PsbY, PsbZ, Psb30/Ycf12, at least 3 peripheral proteins of the oxygen-evolving complex and a large number of cofactors. It forms dimeric complexes. Heme b serves as cofactor.

The protein localises to the plastid. It is found in the chloroplast thylakoid membrane. In terms of biological role, this b-type cytochrome is tightly associated with the reaction center of photosystem II (PSII). PSII is a light-driven water:plastoquinone oxidoreductase that uses light energy to abstract electrons from H(2)O, generating O(2) and a proton gradient subsequently used for ATP formation. It consists of a core antenna complex that captures photons, and an electron transfer chain that converts photonic excitation into a charge separation. This is Cytochrome b559 subunit alpha from Euglena gracilis.